A 210-amino-acid polypeptide reads, in one-letter code: uncharacterized protein (210 aa).

4 helical membrane passes run 5-25 (LAYIPIAAMMVIIPGADTMLV), 50-70 (FWTVIAILGLSVVIAKSVILF), 75-95 (YLGAAYLIYLGVKSFFAKSMF), and 155-175 (IILASILTLLAVLWFLFLVYI).

The protein belongs to the Rht family.

It localises to the cell membrane. This is an uncharacterized protein from Bacillus subtilis (strain 168).